A 307-amino-acid chain; its full sequence is Isethionate sulfite-lyase activating enzyme (307 aa).

Positions 22–307 constitute a Radical SAM core domain; that stretch reads HDGPGIRTVV…EAVVAQTADS (286 aa). The [4Fe-4S] cluster site is built by Cys36, Cys40, Cys43, Cys62, Cys68, Cys71, Cys75, Cys95, Cys98, Cys102, and Cys106. 42–44 contacts S-adenosyl-L-methionine; that stretch reads WCS. 2 consecutive 4Fe-4S ferredoxin-type domains span residues 53 to 85 and 86 to 117; these read VELAYNTGRCLTLAKCVRCVEICTAGAISRAED and DTISIDRALCNDCEQLCSGACPSNALITYGAH. S-adenosyl-L-methionine contacts are provided by residues Gly146, 195 to 197, and His268; that span reads DIK.

It belongs to the organic radical-activating enzymes family. In terms of assembly, monomer. Requires [4Fe-4S] cluster as cofactor.

The enzyme catalyses glycyl-[protein] + reduced [flavodoxin] + S-adenosyl-L-methionine = glycin-2-yl radical-[protein] + semiquinone [flavodoxin] + 5'-deoxyadenosine + L-methionine + H(+). Its pathway is organosulfur degradation; alkanesulfonate degradation. In terms of biological role, involved in an anaerobic respiration pathway that converts the sulfonate isethionate (2-hydroxyethanesulfonate) to ammonia, acetate and sulfide. Catalyzes activation of the isethionate sulfite-lyase IseG under anaerobic conditions by generation of an organic free radical on a glycine residue, via a homolytic cleavage of S-adenosyl-L-methionine (SAM). This Nitratidesulfovibrio vulgaris (strain ATCC 29579 / DSM 644 / CCUG 34227 / NCIMB 8303 / VKM B-1760 / Hildenborough) (Desulfovibrio vulgaris) protein is Isethionate sulfite-lyase activating enzyme.